We begin with the raw amino-acid sequence, 333 residues long: Phenylalanine--tRNA ligase alpha subunit (333 aa).

Residue Glu258 participates in Mg(2+) binding.

This sequence belongs to the class-II aminoacyl-tRNA synthetase family. Phe-tRNA synthetase alpha subunit type 1 subfamily. As to quaternary structure, tetramer of two alpha and two beta subunits. The cofactor is Mg(2+).

Its subcellular location is the cytoplasm. It carries out the reaction tRNA(Phe) + L-phenylalanine + ATP = L-phenylalanyl-tRNA(Phe) + AMP + diphosphate + H(+). The polypeptide is Phenylalanine--tRNA ligase alpha subunit (Wigglesworthia glossinidia brevipalpis).